The sequence spans 295 residues: Reticulon-like protein 1 (295 aa).

Over 1-50 (MSASAQHSQAQQQQQQKSCNCDLLLWRNPVQTGKYFGGSLLALLILKKVN) the chain is Cytoplasmic. A Reticulon domain is found at 20–220 (NCDLLLWRNP…ISNLVKSKTA (201 aa)). A helical membrane pass occupies residues 51–73 (LITFFLKVAYTILFTTGSIEFVS). At 74 to 142 (KLFLGQGLIT…ALFLLHKFFS (69 aa)) the chain is on the lumenal side. A helical transmembrane segment spans residues 143 to 163 (WFSIWTIVFVADIFTFTLPVI). Topologically, residues 164–295 (YHSYKHEIDA…LQNELEKNNA (132 aa)) are cytoplasmic. Phosphothreonine occurs at positions 186 and 219. Polar residues predominate over residues 219 to 235 (TAPVSSTAGPQTASTSK). The disordered stretch occupies residues 219–295 (TAPVSSTAGP…LQNELEKNNA (77 aa)). Position 232 is a phosphoserine (Ser232). Residues 265–295 (STTQEFNVDELSNELKKSTKNLQNELEKNNA) adopt a coiled-coil conformation.

Interacts with POM33.

Its subcellular location is the endoplasmic reticulum membrane. The protein is Reticulon-like protein 1 (RTN1) of Saccharomyces cerevisiae (strain ATCC 204508 / S288c) (Baker's yeast).